Consider the following 384-residue polypeptide: Tetraacyldisaccharide 4'-kinase (384 aa).

Position 72–79 (72–79 (TAGGTGKT)) interacts with ATP.

This sequence belongs to the LpxK family.

It carries out the reaction a lipid A disaccharide + ATP = a lipid IVA + ADP + H(+). It participates in glycolipid biosynthesis; lipid IV(A) biosynthesis; lipid IV(A) from (3R)-3-hydroxytetradecanoyl-[acyl-carrier-protein] and UDP-N-acetyl-alpha-D-glucosamine: step 6/6. Transfers the gamma-phosphate of ATP to the 4'-position of a tetraacyldisaccharide 1-phosphate intermediate (termed DS-1-P) to form tetraacyldisaccharide 1,4'-bis-phosphate (lipid IVA). The polypeptide is Tetraacyldisaccharide 4'-kinase (Halothermothrix orenii (strain H 168 / OCM 544 / DSM 9562)).